Reading from the N-terminus, the 415-residue chain is Dibenzothiophene monooxygenase (415 aa).

Residues Tyr94, 127–132 (NASSEN), 157–161 (KHFSS), Arg280, 365–366 (IG), and Thr387 contribute to the FMN site. The tract at residues 129–140 (SSENNSHILDWK) is lid loop.

The protein belongs to the DszC flavin monooxygenase family. Homotetramer.

It localises to the cytoplasm. The enzyme catalyses dibenzothiophene + 2 FMNH2 + 2 O2 = dibenzothiophene 5,5-dioxide + 2 FMN + 2 H2O + 2 H(+). It carries out the reaction dibenzothiophene + FMNH2 + O2 = dibenzothiophene 5-oxide + FMN + H2O + H(+). It catalyses the reaction dibenzothiophene 5-oxide + FMNH2 + O2 = dibenzothiophene 5,5-dioxide + FMN + H2O + H(+). It participates in sulfur metabolism; dibenzothiophene degradation. Inhibited at high concentrations of FMN or FAD. Functionally, catalyzes the first step of the '4S' desulfurization pathway that removes covalently bound sulfur from dibenzothiophene (DBT) without breaking carbon-carbon bonds. Sulfur dioxygenase which converts DBT to DBT-sulfone (DBTO2 or DBT 5,5-dioxide) probably in a stepwise manner. In addition to FMNH2 can also use FAD (although FAD is less efficient). This chain is Dibenzothiophene monooxygenase, found in Mycolicibacterium goodii (Mycobacterium goodii).